A 424-amino-acid chain; its full sequence is UDP-glycosyltransferase 76H1 (424 aa).

Residues serine 248, 306 to 307 (WA), 324 to 332 (HCGWNSTIE), and 346 to 349 (FADQ) contribute to the UDP-alpha-D-glucose site.

This sequence belongs to the UDP-glycosyltransferase family.

Functionally, may glycosylate diterpenes or flavonols in leaves. The chain is UDP-glycosyltransferase 76H1 from Stevia rebaudiana (Stevia).